A 470-amino-acid chain; its full sequence is A-type ATP synthase subunit B (470 aa).

It belongs to the ATPase alpha/beta chains family. As to quaternary structure, has multiple subunits with at least A(3), B(3), C, D, E, F, H, I and proteolipid K(x).

It is found in the cell membrane. In terms of biological role, component of the A-type ATP synthase that produces ATP from ADP in the presence of a proton gradient across the membrane. The B chain is a regulatory subunit. The polypeptide is A-type ATP synthase subunit B (Haloarcula marismortui (strain ATCC 43049 / DSM 3752 / JCM 8966 / VKM B-1809) (Halobacterium marismortui)).